The sequence spans 184 residues: TRAF-interacting protein with FHA domain-containing protein A (184 aa).

The residue at position 9 (T9) is a Phosphothreonine. An FHA domain is found at 47–103 (VKFGRNSNMCQYTFQDKQVSRIQFVLQPFKQFNSSVLSFEIKNMSKKTSLMVDNQEL). Positions 152-184 (NNWPTQNPIPEDGMYSSYFTHRSSPSEMDENEL) are disordered. Polar residues predominate over residues 168–177 (SYFTHRSSPS).

This sequence belongs to the TIFA family. Homooligomer; homooligomerizes following phosphorylation at Thr-9. Interacts with IRAK1, TRAF2 and TRAF6. Interacts with TIFAB; binding to TIFAB inhibits TRAF6 activation, possibly by inducing a conformational change in TIFA. Interacts with ZCCHC11; binding to ZCCHC11 suppresses the TRAF6-dependent activation of NF-kappa-B. In terms of processing, phosphorylated at Thr-9 following detection of ADP-D-glycero-beta-D-manno-heptose (ADP-Heptose) by ALPK1. Phosphorylation at Thr-9 by ALPK1 leads to the formation of an intermolecular binding between the FHA domain and phosphorylated Thr-9, promoting TIFA oligomerization and TIFA-mediated NF-kappa-B activation. In terms of tissue distribution, highly expressed in the spleen and at lower levels in heart, brain, lung, liver, kidney and testes.

The protein localises to the cytoplasm. Its function is as follows. Adapter molecule that plays a key role in the activation of pro-inflammatory NF-kappa-B signaling following detection of bacterial pathogen-associated molecular pattern metabolites (PAMPs). Promotes activation of an innate immune response by inducing the oligomerization and polyubiquitination of TRAF6, which leads to the activation of TAK1 and IKK through a proteasome-independent mechanism. TIFA-dependent innate immune response is triggered by ADP-D-glycero-beta-D-manno-heptose (ADP-Heptose), a potent PAMP present in all Gram-negative and some Gram-positive bacteria: ADP-Heptose is recognized by ALPK1, which phosphorylates TIFA at Thr-9, leading to TIFA homooligomerization and subsequent activation of pro-inflammatory NF-kappa-B signaling. This Mus musculus (Mouse) protein is TRAF-interacting protein with FHA domain-containing protein A.